The primary structure comprises 247 residues: 3-oxoacyl-[acyl-carrier-protein] reductase MabA (247 aa).

Residues 25-27, Arg-47, 61-62, Gly-90, Tyr-153, Lys-157, Ile-186, and Arg-197 contribute to the NADP(+) site; these read RGI and DV. Tyr-153 acts as the Proton acceptor in catalysis.

Belongs to the short-chain dehydrogenases/reductases (SDR) family. In terms of assembly, homotetramer.

The protein resides in the secreted. The protein localises to the cell wall. The catalysed reaction is a (3R)-hydroxyacyl-[ACP] + NADP(+) = a 3-oxoacyl-[ACP] + NADPH + H(+). Its pathway is lipid metabolism; mycolic acid biosynthesis. Its function is as follows. Part of the mycobacterial fatty acid elongation system FAS-II, which is involved in mycolic acid biosynthesis. Catalyzes the NADPH-dependent reduction of beta-ketoacyl derivatives, the second step of the FAS-II elongation cycle. In Mycobacterium bovis (strain ATCC BAA-935 / AF2122/97), this protein is 3-oxoacyl-[acyl-carrier-protein] reductase MabA.